Here is a 471-residue protein sequence, read N- to C-terminus: Steroid C26-monooxygenase (471 aa).

A substrate-binding site is contributed by glycine 238. Cysteine 412 provides a ligand contact to heme.

It belongs to the cytochrome P450 family. Requires heme as cofactor.

The catalysed reaction is cholest-4-en-3-one + 6 reduced [2Fe-2S]-[ferredoxin] + 3 O2 + 5 H(+) = (25S)-3-oxocholest-4-en-26-oate + 6 oxidized [2Fe-2S]-[ferredoxin] + 4 H2O. Its function is as follows. Involved in the utilization of cholesterol as the sole carbon and energy source by degrading the side chain. Primarily catalyzes the sequential oxidation of the terminal methyl of cholest-4-en-3-one into (25S)-26-hydroxycholest-4-en-3-one (alcohol), (25S)-26-oxocholest-4-en-3-one (aldehyde), to finally yield the carboxylic acid (25S)-3-oxocholest-4-en-26-oate. Also able to sequentially oxidize cholesterol itself, not only cholest-4-en-3-one. The protein is Steroid C26-monooxygenase (cyp125) of Rhodococcus jostii (strain RHA1).